The primary structure comprises 179 residues: Large ribosomal subunit protein uL5 (179 aa).

Lys3 is modified (N6-acetyllysine).

The protein belongs to the universal ribosomal protein uL5 family. In terms of assembly, part of the 50S ribosomal subunit; part of the 5S rRNA/L5/L18/L25 subcomplex. Contacts the 5S rRNA and the P site tRNA. Forms a bridge to the 30S subunit in the 70S ribosome.

Functionally, this is one of the proteins that bind and probably mediate the attachment of the 5S RNA into the large ribosomal subunit, where it forms part of the central protuberance. In the 70S ribosome it contacts protein S13 of the 30S subunit (bridge B1b), connecting the 2 subunits; this bridge is implicated in subunit movement. Contacts the P site tRNA; the 5S rRNA and some of its associated proteins might help stabilize positioning of ribosome-bound tRNAs. The polypeptide is Large ribosomal subunit protein uL5 (Escherichia coli O45:K1 (strain S88 / ExPEC)).